Reading from the N-terminus, the 356-residue chain is 4-hydroxy-3-methylbut-2-en-1-yl diphosphate synthase (flavodoxin) (356 aa).

[4Fe-4S] cluster contacts are provided by Cys-264, Cys-267, Cys-299, and Glu-306.

The protein belongs to the IspG family. The cofactor is [4Fe-4S] cluster.

The catalysed reaction is (2E)-4-hydroxy-3-methylbut-2-enyl diphosphate + oxidized [flavodoxin] + H2O + 2 H(+) = 2-C-methyl-D-erythritol 2,4-cyclic diphosphate + reduced [flavodoxin]. The protein operates within isoprenoid biosynthesis; isopentenyl diphosphate biosynthesis via DXP pathway; isopentenyl diphosphate from 1-deoxy-D-xylulose 5-phosphate: step 5/6. Functionally, converts 2C-methyl-D-erythritol 2,4-cyclodiphosphate (ME-2,4cPP) into 1-hydroxy-2-methyl-2-(E)-butenyl 4-diphosphate. The sequence is that of 4-hydroxy-3-methylbut-2-en-1-yl diphosphate synthase (flavodoxin) from Natranaerobius thermophilus (strain ATCC BAA-1301 / DSM 18059 / JW/NM-WN-LF).